We begin with the raw amino-acid sequence, 321 residues long: Olfactory receptor 52N2 (321 aa).

The Extracellular segment spans residues 1–27 (MSGDNSSSLTPGFFILNGVPGLEATHI). Residue Asn5 is glycosylated (N-linked (GlcNAc...) asparagine). The chain crosses the membrane as a helical span at residues 28–48 (WISLPFCFMYIIAVVGNCGLI). Topologically, residues 49-56 (CLISHEEA) are cytoplasmic. Residues 57–77 (LHRPMYYFLALLSFTDVTLCT) form a helical membrane-spanning segment. At 78-101 (TMVPNMLCIFWFNLKEIDFNACLA) the chain is on the extracellular side. The cysteines at positions 99 and 191 are disulfide-linked. A helical membrane pass occupies residues 102 to 122 (QMFFVHMLTGMESGVLMLMAL). The Cytoplasmic segment spans residues 123–141 (DRYVAICYPLRYATILTNP). Residues 142 to 162 (VIAKAGLATFLRNVMLIIPFT) traverse the membrane as a helical segment. Residues 163 to 198 (LLTKRLPYCRGNFIPHTYCDHMSVAKVSCGNFKVNA) lie on the Extracellular side of the membrane. The chain crosses the membrane as a helical span at residues 199-219 (IYGLMVALLIGVFDICCISVS). At 220-239 (YTMILQAVMSLSSADARHKA) the chain is on the cytoplasmic side. A helical membrane pass occupies residues 240-260 (FSTCTSHMCSIVITYVAAFFT). The Extracellular portion of the chain corresponds to 261-276 (FFTHRFVGHNIPNHIH). Residues 277–297 (IIVANLYLLLPPTMNPIVYGV) form a helical membrane-spanning segment. Residues 298-321 (KTKQIQEGVIKFLLGDKVSFTYDK) are Cytoplasmic-facing.

It belongs to the G-protein coupled receptor 1 family.

The protein localises to the cell membrane. In terms of biological role, odorant receptor. The chain is Olfactory receptor 52N2 (OR52N2) from Homo sapiens (Human).